A 145-amino-acid chain; its full sequence is Peptide methionine sulfoxide reductase MsrB (145 aa).

The MsrB domain occupies 6 to 129 (EEELKQTLTD…NAAALRFVPV (124 aa)). Catalysis depends on cysteine 118, which acts as the Nucleophile.

The protein belongs to the MsrB Met sulfoxide reductase family.

The enzyme catalyses L-methionyl-[protein] + [thioredoxin]-disulfide + H2O = L-methionyl-(R)-S-oxide-[protein] + [thioredoxin]-dithiol. In Enterococcus faecalis (strain ATCC 700802 / V583), this protein is Peptide methionine sulfoxide reductase MsrB.